We begin with the raw amino-acid sequence, 63 residues long: U7-theraphotoxin-Cg1a (63 aa).

Residues Met1 to Ala21 form the signal peptide. Positions Ile22–Arg31 are excised as a propeptide. Cystine bridges form between Cys33–Cys47, Cys40–Cys52, and Cys46–Cys59.

Expressed by the venom gland.

It is found in the secreted. Functionally, inhibits preferentially tetrodotoxin-insensitive sodium currents (Nav) on rat cardiac myocytes (IC(50) is 0.26 uM) and has weaker inhibition activity toward tetrodotoxin-sensitive sodium currents on rat dorsal root ganglion (DRG) sensory neurons (IC(50) is 0.83 uM) and on cockroach dorsal unpaired median (DUM) neurons (IC(50) is 1.19 uM). Has no significant effect on potassium currents on DRG neurons. The polypeptide is U7-theraphotoxin-Cg1a (Chilobrachys guangxiensis (Chinese earth tiger tarantula)).